A 327-amino-acid chain; its full sequence is Ribonucleoside-diphosphate reductase small chain (327 aa).

Asp-70, Glu-101, and His-104 together coordinate Fe cation. The active site involves Tyr-108. Fe cation-binding residues include Glu-164, Glu-198, and His-201.

The protein belongs to the ribonucleoside diphosphate reductase small chain family. As to quaternary structure, heterotetramer composed of a homodimer of the large subunit (R1) and a homodimer of the small subunit (R2). Larger multisubunit protein complex are also active, composed of (R1)n(R2)n. Fe cation is required as a cofactor.

The catalysed reaction is a 2'-deoxyribonucleoside 5'-diphosphate + [thioredoxin]-disulfide + H2O = a ribonucleoside 5'-diphosphate + [thioredoxin]-dithiol. Ribonucleoside-diphosphate reductase holoenzyme provides the precursors necessary for viral DNA synthesis. Allows virus growth in non-dividing cells. Catalyzes the biosynthesis of deoxyribonucleotides from the corresponding ribonucleotides. This African swine fever virus (isolate Tick/South Africa/Pretoriuskop Pr4/1996) (ASFV) protein is Ribonucleoside-diphosphate reductase small chain.